A 1985-amino-acid polypeptide reads, in one-letter code: Treslin (1985 aa).

Disordered regions lie at residues 574–609, 791–858, 894–974, 999–1033, 1072–1156, 1184–1243, 1849–1875, and 1938–1966; these read AQKA…LKPT, EEKS…QPNK, IQET…SIVE, RRNS…RPGS, VYKT…LWGR, VKTP…PSGY, HEDS…QSRS, and FSDG…SPFR. Over residues 823 to 837 the composition is skewed to basic residues; sequence RSAKKRRSTALARHR. The segment covering 964–974 has biased composition (low complexity); it reads SESNSNISIVE. Composition is skewed to polar residues over residues 999-1026 and 1085-1097; these read RRNS…QLQQ and SKNI…QSGN. Over residues 1105-1114 the composition is skewed to low complexity; sequence TPYTPRTPSR. 2 stretches are compositionally biased toward basic and acidic residues: residues 1144–1156 and 1191–1200; these read KPEE…LWGR and QRLESKDFRT. The span at 1201–1224 shows a compositional bias: polar residues; it reads PSRTPTRSNNTTPAKQSMQISNTP. The span at 1225-1238 shows a compositional bias: basic and acidic residues; it reads RKSDLKHPQEHESR.

Belongs to the treslin family. In terms of assembly, interacts with topbp1 (via BRCT domains); interaction is cdk2-dependent. Component of the replisome complex. In terms of processing, phosphorylated during interphase. Cdk2 promotes both phosphorylation and formation of a ticrr-topbp1 complex.

The protein resides in the nucleus. In terms of biological role, regulator of DNA replication and S/M and G2/M checkpoints. Regulates the triggering of DNA replication initiation via its interaction with topbp1 by participating in cdk2-mediated loading of cdc45l onto replication origins. Required for the transition from pre-replication complex (pre-RC) to pre-initiation complex (pre-IC). Required to prevent mitotic entry after treatment with ionizing radiation. In Xenopus laevis (African clawed frog), this protein is Treslin (ticrr).